The following is a 1088-amino-acid chain: Insulin receptor substrate 1-B (1088 aa).

Residues 15 to 117 (DVRKVGYLRK…WYQALVDLHN (103 aa)) enclose the PH domain. A Phosphotyrosine modification is found at Tyr48. Positions 155–259 (FKEVWQVIMK…EAMKALSDEF (105 aa)) constitute an IRS-type PTB domain. The interval 259 to 428 (FRPRSKSQSS…GGFISSDEYG (170 aa)) is disordered. Low complexity-rich tracts occupy residues 264–278 (KSQS…ISVP), 302–312 (SATATSPAGGA), 379–400 (SPSA…GSTS), and 408–420 (SSAS…SDGG). At Ser307 the chain carries Phosphoserine. At Tyr460 the chain carries Phosphotyrosine; by INSR. Residues 460-463 (YICM) carry the YXXM motif 1 motif. 2 stretches are compositionally biased toward polar residues: residues 466–479 (SSSH…QRYQ) and 499–516 (SSGT…PSQS). 2 disordered regions span residues 466 to 485 (SSSH…RGEE) and 496 to 516 (RTHS…PSQS). 5 short sequence motifs (YXXM motif) span residues 521–524 (YTEM), 567–570 (YMPM), 584–587 (YMPM), 612–615 (YMMM), and 654–657 (YINM). A phosphotyrosine; by INSR mark is found at Tyr567 and Tyr584. Tyr612 carries the post-translational modification Phosphotyrosine. Residues 704 to 785 (NLRISANSGH…PPEPKSPGEY (82 aa)) are disordered. The segment covering 707 to 718 (ISANSGHNLYTE) has biased composition (polar residues). A compositionally biased stretch (low complexity) spans 719–729 (DSSSSSTSSDS). Tyr785 and Tyr823 each carry phosphotyrosine; by INSR. The segment at 785–787 (YVN) is GRB2-binding. The short motif at 823-826 (YMNM) is the YXXM motif 7 element. A compositionally biased stretch (polar residues) spans 840-863 (TSSYEPPNKPVNSVCPTETCSSSR). Positions 840–868 (TSSYEPPNKPVNSVCPTETCSSSRPPIRG) are disordered. The residue at position 875 (Tyr875) is a Phosphotyrosine; by INSR. 2 short sequence motifs (YXXM motif) span residues 875-878 (YMSM) and 909-912 (YAEM). A disordered region spans residues 935 to 1006 (ASRSSLLGQG…SGEDVKRHSS (72 aa)). Polar residues-rich tracts occupy residues 946–961 (GPSA…NRNP) and 980–995 (ETFS…TTGP). A phosphotyrosine; by INSR mark is found at Tyr1037 and Tyr1069.

As to quaternary structure, interacts with the NPXY motif of tyrosine-phosphorylated igf1r and insr via the PTB domain. Binds to phosphatidylinositol 3-kinase p85 subunit at a low level in vitro prior to phosphorylation. Binding is greatly enhanced following tyrosine phosphorylation by insr and probably occurs via the phosphorylated YXXM motifs. In terms of processing, phosphorylation of Tyr-785 is required for grb2-binding.

May mediate the control of various cellular processes by insulin. When phosphorylated by the insulin receptor binds specifically to various cellular proteins containing SH2 domains such as phosphatidylinositol 3-kinase p85 subunit or grb2. Activates phosphatidylinositol 3-kinase when bound to the regulatory p85 subunit. The protein is Insulin receptor substrate 1-B (irs1-b) of Xenopus laevis (African clawed frog).